A 167-amino-acid polypeptide reads, in one-letter code: Urease accessory protein UreE (167 aa).

The protein belongs to the UreE family.

The protein localises to the cytoplasm. In terms of biological role, involved in urease metallocenter assembly. Binds nickel. Probably functions as a nickel donor during metallocenter assembly. The chain is Urease accessory protein UreE from Pseudomonas aeruginosa (strain LESB58).